The chain runs to 198 residues: uncharacterized protein (198 aa).

Disordered regions lie at residues 15-69 (RLGQ…KDTR) and 172-198 (FSVK…LWGL). Basic and acidic residues-rich tracts occupy residues 37 to 49 (HKSF…DQSR) and 56 to 69 (FNEK…KDTR). Positions 176 to 186 (ESSNLSNNDSD) are enriched in low complexity. A compositionally biased stretch (acidic residues) spans 187 to 198 (ASLDEDTLLWGL).

The protein resides in the nucleus. This is an uncharacterized protein from Schizosaccharomyces pombe (strain 972 / ATCC 24843) (Fission yeast).